The sequence spans 97 residues: Sperm-associated acrosin inhibitor (97 aa).

The N-terminal stretch at 1 to 26 (MAFFSSRVRALFILVLVLPLCSETGF) is a signal peptide. In terms of domain architecture, Kazal-like spans 32 to 90 (TRKEPDCDVYRSHLFFCTREMDPICGTNGKSYANPCIFCSEKLGRNEKFDFGHWGHCRE). Disulfide bonds link Cys38/Cys70, Cys48/Cys67, and Cys56/Cys88.

As to expression, seminal plasma.

The protein localises to the secreted. Its function is as follows. Inhibits acrosin. The sequence is that of Sperm-associated acrosin inhibitor from Sus scrofa (Pig).